Consider the following 517-residue polypeptide: Serine hydroxymethyltransferase 2, mitochondrial (517 aa).

The transit peptide at Met-1 to Met-29 directs the protein to the mitochondrion. Ser-82 serves as a coordination point for L-serine. Residues Ser-82, Tyr-102, Glu-104, Tyr-112, Ser-148–Ser-150, and His-177 each bind pemetrexed. L-serine-binding residues include Glu-104 and Tyr-112. Position 104 (Glu-104) interacts with methotrexate. Thr-184 to Thr-186 provides a ligand contact to methotrexate. Residues Ser-232 and His-260 each coordinate pemetrexed. L-serine-binding residues include His-260 and Lys-286. At Lys-286 the chain carries N6-(pyridoxal phosphate)lysine. Residue Gly-331 coordinates pemetrexed. Lys-414 contacts methotrexate. Residue Arg-430 coordinates L-serine. Arg-430 provides a ligand contact to pemetrexed.

This sequence belongs to the SHMT family. In terms of assembly, homotetramer. Requires pyridoxal 5'-phosphate as cofactor. In terms of tissue distribution, ubiquitous. Mainly expressed in the shoot apical meristem and roots. Also detected in the leaf vasculature, especially in the protoxylem and adjacent cell layers.

It localises to the mitochondrion. The catalysed reaction is (6R)-5,10-methylene-5,6,7,8-tetrahydrofolate + glycine + H2O = (6S)-5,6,7,8-tetrahydrofolate + L-serine. Its pathway is one-carbon metabolism; tetrahydrofolate interconversion. Inhibited by the antifolate drugs methotrexate and pemetrexed. In terms of biological role, functions outside the photorespiratory pathway in catalyzing the interconversion of serine and glycine with the conversion of tetrahydrofolate (THF) into 5,10-methylene-THF. The polypeptide is Serine hydroxymethyltransferase 2, mitochondrial (Arabidopsis thaliana (Mouse-ear cress)).